We begin with the raw amino-acid sequence, 351 residues long: Spindolin (351 aa).

The first 20 residues, 1–20 (MNKFYYICIYINILYVCVSG), serve as a signal peptide directing secretion.

As to quaternary structure, homodimer; disulfide-linked.

In terms of biological role, this protein is a spindle body protein. This chain is Spindolin, found in Lepidoptera (butterflies and moths).